We begin with the raw amino-acid sequence, 449 residues long: UDP-N-acetylmuramoylalanine--D-glutamate ligase (449 aa).

118–124 (GTNGKTT) provides a ligand contact to ATP.

It belongs to the MurCDEF family.

The protein localises to the cytoplasm. The catalysed reaction is UDP-N-acetyl-alpha-D-muramoyl-L-alanine + D-glutamate + ATP = UDP-N-acetyl-alpha-D-muramoyl-L-alanyl-D-glutamate + ADP + phosphate + H(+). The protein operates within cell wall biogenesis; peptidoglycan biosynthesis. Functionally, cell wall formation. Catalyzes the addition of glutamate to the nucleotide precursor UDP-N-acetylmuramoyl-L-alanine (UMA). The protein is UDP-N-acetylmuramoylalanine--D-glutamate ligase of Staphylococcus carnosus (strain TM300).